The primary structure comprises 427 residues: tRNA(Ile)-lysidine synthase (427 aa).

Position 25–30 (25–30) interacts with ATP; sequence SGGLDS.

Belongs to the tRNA(Ile)-lysidine synthase family.

It localises to the cytoplasm. It carries out the reaction cytidine(34) in tRNA(Ile2) + L-lysine + ATP = lysidine(34) in tRNA(Ile2) + AMP + diphosphate + H(+). In terms of biological role, ligates lysine onto the cytidine present at position 34 of the AUA codon-specific tRNA(Ile) that contains the anticodon CAU, in an ATP-dependent manner. Cytidine is converted to lysidine, thus changing the amino acid specificity of the tRNA from methionine to isoleucine. This chain is tRNA(Ile)-lysidine synthase, found in Histophilus somni (strain 129Pt) (Haemophilus somnus).